The sequence spans 271 residues: Phosphoribosylformylglycinamidine synthase subunit PurQ (271 aa).

A Glutamine amidotransferase type-1 domain is found at 7 to 253 (KVAVLRMEGT…FGYQVGRREG (247 aa)). The Nucleophile role is filled by C104. Residues H238 and E240 contribute to the active site.

In terms of assembly, part of the FGAM synthase complex composed of 1 PurL, 1 PurQ and 2 PurS subunits.

The protein localises to the cytoplasm. It catalyses the reaction N(2)-formyl-N(1)-(5-phospho-beta-D-ribosyl)glycinamide + L-glutamine + ATP + H2O = 2-formamido-N(1)-(5-O-phospho-beta-D-ribosyl)acetamidine + L-glutamate + ADP + phosphate + H(+). It carries out the reaction L-glutamine + H2O = L-glutamate + NH4(+). Its pathway is purine metabolism; IMP biosynthesis via de novo pathway; 5-amino-1-(5-phospho-D-ribosyl)imidazole from N(2)-formyl-N(1)-(5-phospho-D-ribosyl)glycinamide: step 1/2. Part of the phosphoribosylformylglycinamidine synthase complex involved in the purines biosynthetic pathway. Catalyzes the ATP-dependent conversion of formylglycinamide ribonucleotide (FGAR) and glutamine to yield formylglycinamidine ribonucleotide (FGAM) and glutamate. The FGAM synthase complex is composed of three subunits. PurQ produces an ammonia molecule by converting glutamine to glutamate. PurL transfers the ammonia molecule to FGAR to form FGAM in an ATP-dependent manner. PurS interacts with PurQ and PurL and is thought to assist in the transfer of the ammonia molecule from PurQ to PurL. The protein is Phosphoribosylformylglycinamidine synthase subunit PurQ of Archaeoglobus fulgidus (strain ATCC 49558 / DSM 4304 / JCM 9628 / NBRC 100126 / VC-16).